We begin with the raw amino-acid sequence, 417 residues long: Serine protease hepsin (417 aa).

Residues 1-23 (MAQKEGGRTVPCCSRPKVAALTA) are Cytoplasmic-facing. Residues 24-44 (GTLLLLTAIGAASWAIVAVLL) form a helical; Signal-anchor for type II membrane protein membrane-spanning segment. Topologically, residues 45–417 (RSDQEPLYPV…SEASGMVTQL (373 aa)) are extracellular. The 98-residue stretch at 54 to 151 (VQVSSADARL…RGRFLATICQ (98 aa)) folds into the SRCR domain. Cystine bridges form between Cys77–Cys140, Cys90–Cys150, Cys119–Cys138, Cys153–Cys277, Cys188–Cys204, Cys291–Cys359, Cys322–Cys338, and Cys349–Cys381. Asn112 carries N-linked (GlcNAc...) asparagine glycosylation. Positions 163 to 405 (IVGGRDTSLG…FREWIFQAIK (243 aa)) constitute a Peptidase S1 domain. Residues His203 and Asp257 each act as charge relay system in the active site. The Charge relay system role is filled by Ser353.

The protein belongs to the peptidase S1 family.

The protein resides in the membrane. It catalyses the reaction Cleavage after basic amino-acid residues, with Arg strongly preferred to Lys.. Functionally, plays an essential role in cell growth and maintenance of cell morphology. May mediate the activating cleavage of HGF and MST1/HGFL. Plays a role in the proteolytic processing of ACE2. This is Serine protease hepsin (HPN) from Pongo abelii (Sumatran orangutan).